Here is a 91-residue protein sequence, read N- to C-terminus: Late embryogenis abundant protein 2 (91 aa).

Residues 47–72 form a disordered region; the sequence is KRAGEASSEKAPWVPDPKTGYYRPET.

Belongs to the LEA type 3 family.

Its subcellular location is the cytoplasm. It localises to the nucleus. The sequence is that of Late embryogenis abundant protein 2 from Arabidopsis thaliana (Mouse-ear cress).